A 130-amino-acid chain; its full sequence is Large ribosomal subunit protein bL19 (130 aa).

It belongs to the bacterial ribosomal protein bL19 family.

In terms of biological role, this protein is located at the 30S-50S ribosomal subunit interface and may play a role in the structure and function of the aminoacyl-tRNA binding site. In Cupriavidus taiwanensis (strain DSM 17343 / BCRC 17206 / CCUG 44338 / CIP 107171 / LMG 19424 / R1) (Ralstonia taiwanensis (strain LMG 19424)), this protein is Large ribosomal subunit protein bL19.